Here is a 124-residue protein sequence, read N- to C-terminus: Small ribosomal subunit protein uS12 (124 aa).

Residues 8–28 (IRSAREKTDKKTKSPALKSCP) are disordered. The segment covering 10-19 (SAREKTDKKT) has biased composition (basic and acidic residues). At Asp-89 the chain carries 3-methylthioaspartic acid.

It belongs to the universal ribosomal protein uS12 family. In terms of assembly, part of the 30S ribosomal subunit. Contacts proteins S8 and S17. May interact with IF1 in the 30S initiation complex.

Functionally, with S4 and S5 plays an important role in translational accuracy. Its function is as follows. Interacts with and stabilizes bases of the 16S rRNA that are involved in tRNA selection in the A site and with the mRNA backbone. Located at the interface of the 30S and 50S subunits, it traverses the body of the 30S subunit contacting proteins on the other side and probably holding the rRNA structure together. The combined cluster of proteins S8, S12 and S17 appears to hold together the shoulder and platform of the 30S subunit. The protein is Small ribosomal subunit protein uS12 of Arthrospira platensis (Spirulina platensis).